The following is a 554-amino-acid chain: Glucose-6-phosphate isomerase (554 aa).

Residue Glu359 is the Proton donor of the active site. Active-site residues include His390 and Lys518.

The protein belongs to the GPI family.

The protein resides in the cytoplasm. It catalyses the reaction alpha-D-glucose 6-phosphate = beta-D-fructose 6-phosphate. The protein operates within carbohydrate biosynthesis; gluconeogenesis. It participates in carbohydrate degradation; glycolysis; D-glyceraldehyde 3-phosphate and glycerone phosphate from D-glucose: step 2/4. Catalyzes the reversible isomerization of glucose-6-phosphate to fructose-6-phosphate. This chain is Glucose-6-phosphate isomerase, found in Pseudomonas aeruginosa (strain LESB58).